A 215-amino-acid chain; its full sequence is Probable phosphoglycerate mutase GpmB (215 aa).

Substrate contacts are provided by residues 8 to 15 (RHGETLWN), 21 to 22 (QG), Arg58, Arg60, 82 to 85 (ELNM), and 151 to 152 (GM). The Tele-phosphohistidine intermediate role is filled by His9. Glu82 functions as the Proton donor/acceptor in the catalytic mechanism.

It belongs to the phosphoglycerate mutase family. GpmB subfamily.

It carries out the reaction (2R)-2-phosphoglycerate = (2R)-3-phosphoglycerate. It functions in the pathway carbohydrate degradation; glycolysis; pyruvate from D-glyceraldehyde 3-phosphate: step 3/5. The sequence is that of Probable phosphoglycerate mutase GpmB from Erwinia tasmaniensis (strain DSM 17950 / CFBP 7177 / CIP 109463 / NCPPB 4357 / Et1/99).